We begin with the raw amino-acid sequence, 354 residues long: S-adenosylmethionine:tRNA ribosyltransferase-isomerase (354 aa).

This sequence belongs to the QueA family. Monomer.

The protein localises to the cytoplasm. It catalyses the reaction 7-aminomethyl-7-carbaguanosine(34) in tRNA + S-adenosyl-L-methionine = epoxyqueuosine(34) in tRNA + adenine + L-methionine + 2 H(+). The protein operates within tRNA modification; tRNA-queuosine biosynthesis. In terms of biological role, transfers and isomerizes the ribose moiety from AdoMet to the 7-aminomethyl group of 7-deazaguanine (preQ1-tRNA) to give epoxyqueuosine (oQ-tRNA). This chain is S-adenosylmethionine:tRNA ribosyltransferase-isomerase, found in Pseudomonas syringae pv. syringae (strain B728a).